Here is a 444-residue protein sequence, read N- to C-terminus: Elongation factor 1-alpha (444 aa).

The tr-type G domain occupies 15 to 236 (KPHINLAVVG…VLDTFQPPPR (222 aa)). The interval 24–31 (GHVDNGKS) is G1. 24–31 (GHVDNGKS) lines the GTP pocket. Ser31 is a binding site for Mg(2+). A G2 region spans residues 80–84 (GVTIE). Residues 101-104 (DLPG) are G3. GTP is bound by residues 101 to 105 (DLPGH) and 163 to 166 (NKMD). Residues 163–166 (NKMD) form a G4 region. The segment at 202–204 (SAI) is G5.

The protein belongs to the TRAFAC class translation factor GTPase superfamily. Classic translation factor GTPase family. EF-Tu/EF-1A subfamily.

It is found in the cytoplasm. The enzyme catalyses GTP + H2O = GDP + phosphate + H(+). Functionally, GTP hydrolase that promotes the GTP-dependent binding of aminoacyl-tRNA to the A-site of ribosomes during protein biosynthesis. The chain is Elongation factor 1-alpha from Pyrobaculum calidifontis (strain DSM 21063 / JCM 11548 / VA1).